A 468-amino-acid polypeptide reads, in one-letter code: Protein wingless (468 aa).

The signal sequence occupies residues 1–17 (MDISYIFVICLMALCSG). The tract at residues 83-106 (VKGANLAISECQHQFRNRRWNCST) is binds porcupine. A disulfide bridge links Cys-93 with Cys-104. 2 N-linked (GlcNAc...) asparagine glycosylation sites follow: Asn-103 and Asn-108. 4 disulfides stabilise this stretch: Cys-146-Cys-154, Cys-156-Cys-185, Cys-233-Cys-247, and Cys-235-Cys-242. Ser-239 carries O-palmitoleoyl serine; by PORCN lipidation. The segment at 333-362 (ISKIHHPNMPSPNSLPQAGQRGGRNGRRQG) is disordered. Disulfide bonds link Cys-397–Cys-428, Cys-413–Cys-423, Cys-427–Cys-467, Cys-443–Cys-458, Cys-445–Cys-455, and Cys-450–Cys-451. The N-linked (GlcNAc...) asparagine glycan is linked to Asn-414.

This sequence belongs to the Wnt family. In terms of assembly, monomer; folds by intramolecular disulfide bonds. Interacts with porcupine (por). Interacts with wls; in the Golgi. Interacts with en. Interacts with the proteoglycan Cow (heparan sulfate-bound form); this stabilizes wg and promotes its extracellular distribution. Interacts with peg; the interaction facilitates short-range diffusion of wg. In terms of processing, palmitoleoylated by porcupine. The lipid group functions as a sorting signal, targeting the ligand to polarized vesicles that transport wg to unique sites at the cell surface. Depalmitoleoylated by notum, leading to inhibit Wnt signaling pathway. Post-translationally, major form is glycosylated at 2 sites, glycosylation is stimulated by porcupine at the ER. Segmented expression in embryos. In embryonic tracheal cells, expression is in stripes flanking the tracheal placode.

Its subcellular location is the secreted. The protein resides in the synapse. The protein localises to the membrane. It localises to the extracellular space. It is found in the extracellular matrix. In terms of biological role, binds as a ligand to a family of frizzled seven-transmembrane receptors and acts through a cascade of genes on the nucleus. Segment polarity protein. May be a growth factor. Acts on neighboring cells to regulate at least one gene, the homeobox segmentation gene engrailed. Wg signal represses arm phosphorylation. Wg signaling operates by inactivating the sgg repression of engrailed autoactivation. Wg and Wnt2 have a role in the developing trachea and together are responsible for all dorsal trunk formation. Wg also acts in the developing epidermis. Acts as a morphogen, and diffuses long distances despite its lipidation. Lipophorin is required for diffusion, probably by acting as vehicle for its movement, explaining how it can spread over long distances despite its lipidation. In non-neuronal cells, wls directs wg secretion via clathrin-mediated endocytosis and the retromer complex (a conserved protein complex consisting of Vps26 and Vps35) to sustain a wls traffic loop encompassing the Golgi, the cell surface, an endocytic compartment and a retrograde route leading back to the Golgi. In neuronal cells (the larval motorneuron NMJ), wg signal moves across the synapse through the release of wls-containing exosome-like vesicles. This is Protein wingless (wg) from Drosophila melanogaster (Fruit fly).